Consider the following 423-residue polypeptide: Mannose-6-phosphate isomerase (423 aa).

Residue Ala-2 is modified to N-acetylalanine. 2 positions are modified to phosphoserine: Ser-102 and Ser-108. Residues Gln-110, His-112, Glu-137, and His-276 each contribute to the Zn(2+) site. Residue Arg-295 is part of the active site.

This sequence belongs to the mannose-6-phosphate isomerase type 1 family. Zn(2+) serves as cofactor. In terms of tissue distribution, expressed in all tissues, but more abundant in testis.

It is found in the cytoplasm. The catalysed reaction is D-mannose 6-phosphate = D-fructose 6-phosphate. It participates in nucleotide-sugar biosynthesis; GDP-alpha-D-mannose biosynthesis; alpha-D-mannose 1-phosphate from D-fructose 6-phosphate: step 1/2. In terms of biological role, isomerase that catalyzes the interconversion of fructose-6-P and mannose-6-P and has a critical role in the supply of D-mannose derivatives required for many eukaryotic glycosylation reactions. The sequence is that of Mannose-6-phosphate isomerase from Mus musculus (Mouse).